Reading from the N-terminus, the 304-residue chain is Aspartate carbamoyltransferase catalytic subunit (304 aa).

R57 and T58 together coordinate carbamoyl phosphate. L-aspartate is bound at residue K85. Residues R107, H134, and Q137 each coordinate carbamoyl phosphate. The L-aspartate site is built by R167 and R216. Carbamoyl phosphate contacts are provided by A260 and P261.

This sequence belongs to the aspartate/ornithine carbamoyltransferase superfamily. ATCase family. In terms of assembly, heterododecamer (2C3:3R2) of six catalytic PyrB chains organized as two trimers (C3), and six regulatory PyrI chains organized as three dimers (R2).

The enzyme catalyses carbamoyl phosphate + L-aspartate = N-carbamoyl-L-aspartate + phosphate + H(+). The protein operates within pyrimidine metabolism; UMP biosynthesis via de novo pathway; (S)-dihydroorotate from bicarbonate: step 2/3. Catalyzes the condensation of carbamoyl phosphate and aspartate to form carbamoyl aspartate and inorganic phosphate, the committed step in the de novo pyrimidine nucleotide biosynthesis pathway. The polypeptide is Aspartate carbamoyltransferase catalytic subunit (Fusobacterium nucleatum subsp. nucleatum (strain ATCC 25586 / DSM 15643 / BCRC 10681 / CIP 101130 / JCM 8532 / KCTC 2640 / LMG 13131 / VPI 4355)).